Reading from the N-terminus, the 432-residue chain is Phosphoribosylamine--glycine ligase (432 aa).

The region spanning arginine 110–asparagine 316 is the ATP-grasp domain. Residue isoleucine 137–threonine 194 coordinates ATP. Mg(2+) contacts are provided by glutamine 274, glutamate 286, and asparagine 288. Glutamine 274, glutamate 286, and asparagine 288 together coordinate Mn(2+).

Belongs to the GARS family. It depends on Mg(2+) as a cofactor. Requires Mn(2+) as cofactor.

The enzyme catalyses 5-phospho-beta-D-ribosylamine + glycine + ATP = N(1)-(5-phospho-beta-D-ribosyl)glycinamide + ADP + phosphate + H(+). Its pathway is purine metabolism; IMP biosynthesis via de novo pathway; N(1)-(5-phospho-D-ribosyl)glycinamide from 5-phospho-alpha-D-ribose 1-diphosphate: step 2/2. The sequence is that of Phosphoribosylamine--glycine ligase from Methanococcoides burtonii (strain DSM 6242 / NBRC 107633 / OCM 468 / ACE-M).